Reading from the N-terminus, the 452-residue chain is THO complex subunit 5A (452 aa).

It belongs to the THOC5 family. In terms of assembly, component of the THO complex, which is composed of THO1, THO2, THO3, THO5, THO6 and THO7.

The protein localises to the nucleus. Acts as a component of the THO subcomplex of the TREX complex which is thought to couple mRNA transcription, processing and nuclear export. The sequence is that of THO complex subunit 5A (THO5A) from Arabidopsis thaliana (Mouse-ear cress).